The following is a 185-amino-acid chain: Pyridoxal 5'-phosphate synthase subunit PdxT (185 aa).

Gly46–Ser48 provides a ligand contact to L-glutamine. Cys75 (nucleophile) is an active-site residue. Residues Arg101 and Ile129–Arg130 contribute to the L-glutamine site. Active-site charge relay system residues include His165 and Glu167.

Belongs to the glutaminase PdxT/SNO family. As to quaternary structure, in the presence of PdxS, forms a dodecamer of heterodimers. Only shows activity in the heterodimer.

The catalysed reaction is aldehydo-D-ribose 5-phosphate + D-glyceraldehyde 3-phosphate + L-glutamine = pyridoxal 5'-phosphate + L-glutamate + phosphate + 3 H2O + H(+). It catalyses the reaction L-glutamine + H2O = L-glutamate + NH4(+). It participates in cofactor biosynthesis; pyridoxal 5'-phosphate biosynthesis. Catalyzes the hydrolysis of glutamine to glutamate and ammonia as part of the biosynthesis of pyridoxal 5'-phosphate. The resulting ammonia molecule is channeled to the active site of PdxS. The protein is Pyridoxal 5'-phosphate synthase subunit PdxT of Staphylococcus epidermidis (strain ATCC 12228 / FDA PCI 1200).